A 193-amino-acid chain; its full sequence is Threonylcarbamoyl-AMP synthase (193 aa).

The 180-residue stretch at 14–193 folds into the YrdC-like domain; that stretch reads SRLQQRARKQ…IDLESGRVLR (180 aa).

This sequence belongs to the SUA5 family. TsaC subfamily.

It localises to the cytoplasm. The enzyme catalyses L-threonine + hydrogencarbonate + ATP = L-threonylcarbamoyladenylate + diphosphate + H2O. Its function is as follows. Required for the formation of a threonylcarbamoyl group on adenosine at position 37 (t(6)A37) in tRNAs that read codons beginning with adenine. Catalyzes the conversion of L-threonine, HCO(3)(-)/CO(2) and ATP to give threonylcarbamoyl-AMP (TC-AMP) as the acyladenylate intermediate, with the release of diphosphate. The polypeptide is Threonylcarbamoyl-AMP synthase (Chromobacterium violaceum (strain ATCC 12472 / DSM 30191 / JCM 1249 / CCUG 213 / NBRC 12614 / NCIMB 9131 / NCTC 9757 / MK)).